A 153-amino-acid chain; its full sequence is Ribosome maturation factor RimP (153 aa).

This sequence belongs to the RimP family.

The protein resides in the cytoplasm. Functionally, required for maturation of 30S ribosomal subunits. This Clostridium botulinum (strain Kyoto / Type A2) protein is Ribosome maturation factor RimP.